The following is a 208-amino-acid chain: V-type ATP synthase subunit D (208 aa).

It belongs to the V-ATPase D subunit family.

In terms of biological role, produces ATP from ADP in the presence of a proton gradient across the membrane. In Streptococcus pyogenes serotype M6 (strain ATCC BAA-946 / MGAS10394), this protein is V-type ATP synthase subunit D.